Consider the following 439-residue polypeptide: Xylose isomerase (439 aa).

Active-site residues include H98 and D101. E229, E265, H268, D293, D304, D306, and D335 together coordinate Mg(2+).

This sequence belongs to the xylose isomerase family. In terms of assembly, homotetramer. Mg(2+) is required as a cofactor.

It localises to the cytoplasm. It carries out the reaction alpha-D-xylose = alpha-D-xylulofuranose. Functionally, involved in D-xylose catabolism. This chain is Xylose isomerase (xylA), found in Staphylococcus xylosus.